The sequence spans 629 residues: Methyl-accepting chemotaxis protein PctB (629 aa).

Over 1-10 (MIKSLKFSHK) the chain is Cytoplasmic. The chain crosses the membrane as a helical span at residues 11–31 (ILLAAALVVIATFSLFTLYND). Topologically, residues 32–276 (SLQRASIRED…AYAMLTKLRT (245 aa)) are periplasmic. The region spanning 37 to 260 (SIREDLEDYL…LSGLDWYIGI (224 aa)) is the Cache domain. Residues Tyr-109, Ser-115, Tyr-121, 126 to 128 (RPW), Glu-146, and Asp-173 each bind L-arginine. L-glutamine-binding positions include Ser-115, Tyr-121, 126-128 (RPW), 144-146 (YME), and Asp-173. Residues 277 to 297 (SAIVAALIAVVAIVLLLGMLI) traverse the membrane as a helical segment. The 55-residue stretch at 298–352 (RVLMQPLTDMGRAMQDIAQGEGDLTKRLKVTSNDEFGALAISFNRFVERIHESIR) folds into the HAMP domain. The Cytoplasmic segment spans residues 298–629 (RVLMQPLTDM…LRQLVDSFKI (332 aa)). The Methyl-accepting transducer domain occupies 357–593 (TARQLHDVAQ…SLNMDITEIN (237 aa)). The disordered stretch occupies residues 405–424 (RNAADASHHASDANHQAEDG). Residues 410-424 (ASHHASDANHQAEDG) show a composition bias toward basic and acidic residues.

This sequence belongs to the methyl-accepting chemotaxis (MCP) protein family. In terms of assembly, monomer in the absence and presence of ligands.

It is found in the cell inner membrane. In terms of biological role, chemotactic-signal transducers respond to changes in the concentration of attractants and repellents in the environment, transduce a signal from the outside to the inside of the cell, and facilitate sensory adaptation through the variation of the level of methylation. Responds to L-Arg, L-Gln, L-Ala, L-Glu, L-Lys, L-Met and L-Tyr. Also involved in repellent responses to trichloroethylene (TCE), chloroform and methylthiocyanate. This chain is Methyl-accepting chemotaxis protein PctB (pctB), found in Pseudomonas aeruginosa (strain ATCC 15692 / DSM 22644 / CIP 104116 / JCM 14847 / LMG 12228 / 1C / PRS 101 / PAO1).